The following is a 694-amino-acid chain: Ribonuclease R (694 aa).

Positions 204–525 constitute an RNB domain; it reads RKDLRDLLCF…IVHRLLFHPL (322 aa). The 78-residue stretch at 571 to 648 folds into the S1 motif domain; sequence ATLYKAFIIT…LTQSIEWTLV (78 aa). A disordered region spans residues 652–694; the sequence is TKAKAKRTSKKKKTESVTTKEKKKSPAKKKKGATKTKKGSGKN. Basic residues-rich tracts occupy residues 654–664 and 672–694; these read AKAKRTSKKKK and EKKK…SGKN.

It belongs to the RNR ribonuclease family. RNase R subfamily.

The protein localises to the cytoplasm. It carries out the reaction Exonucleolytic cleavage in the 3'- to 5'-direction to yield nucleoside 5'-phosphates.. Functionally, 3'-5' exoribonuclease that releases 5'-nucleoside monophosphates and is involved in maturation of structured RNAs. This Chlamydia trachomatis serovar D (strain ATCC VR-885 / DSM 19411 / UW-3/Cx) protein is Ribonuclease R.